The following is a 631-amino-acid chain: tRNA uridine 5-carboxymethylaminomethyl modification enzyme MnmG (631 aa).

Residues 13-18 (GGGHAG), valine 125, and serine 180 contribute to the FAD site. 273-287 (GPRYCPSIEDKVNRY) lines the NAD(+) pocket. Glutamine 370 provides a ligand contact to FAD.

This sequence belongs to the MnmG family. Homodimer. Heterotetramer of two MnmE and two MnmG subunits. It depends on FAD as a cofactor.

The protein resides in the cytoplasm. Functionally, NAD-binding protein involved in the addition of a carboxymethylaminomethyl (cmnm) group at the wobble position (U34) of certain tRNAs, forming tRNA-cmnm(5)s(2)U34. In Alcanivorax borkumensis (strain ATCC 700651 / DSM 11573 / NCIMB 13689 / SK2), this protein is tRNA uridine 5-carboxymethylaminomethyl modification enzyme MnmG.